A 256-amino-acid chain; its full sequence is Thiazole synthase (256 aa).

K96 acts as the Schiff-base intermediate with DXP in catalysis. 1-deoxy-D-xylulose 5-phosphate-binding positions include G157, 184–185 (AG), and 206–207 (NT).

This sequence belongs to the ThiG family. In terms of assembly, homotetramer. Forms heterodimers with either ThiH or ThiS.

It is found in the cytoplasm. The enzyme catalyses [ThiS sulfur-carrier protein]-C-terminal-Gly-aminoethanethioate + 2-iminoacetate + 1-deoxy-D-xylulose 5-phosphate = [ThiS sulfur-carrier protein]-C-terminal Gly-Gly + 2-[(2R,5Z)-2-carboxy-4-methylthiazol-5(2H)-ylidene]ethyl phosphate + 2 H2O + H(+). It functions in the pathway cofactor biosynthesis; thiamine diphosphate biosynthesis. Functionally, catalyzes the rearrangement of 1-deoxy-D-xylulose 5-phosphate (DXP) to produce the thiazole phosphate moiety of thiamine. Sulfur is provided by the thiocarboxylate moiety of the carrier protein ThiS. In vitro, sulfur can be provided by H(2)S. This chain is Thiazole synthase, found in Roseobacter denitrificans (strain ATCC 33942 / OCh 114) (Erythrobacter sp. (strain OCh 114)).